Consider the following 519-residue polypeptide: 2,3-bisphosphoglycerate-independent phosphoglycerate mutase (519 aa).

2 residues coordinate Mn(2+): aspartate 9 and serine 60. Catalysis depends on serine 60, which acts as the Phosphoserine intermediate. Residues 76 to 91 show a composition bias toward basic and acidic residues; sequence DSARVSDSIARSRGEA. Residues 76-102 are disordered; the sequence is DSARVSDSIARSRGEAPPDDDAQDPPF. Substrate contacts are provided by residues histidine 134, 163–164, arginine 195, arginine 201, 267–270, and lysine 341; these read RD and RSDR. Mn(2+)-binding residues include aspartate 408, histidine 412, aspartate 449, histidine 450, and histidine 466.

This sequence belongs to the BPG-independent phosphoglycerate mutase family. Mn(2+) serves as cofactor.

It carries out the reaction (2R)-2-phosphoglycerate = (2R)-3-phosphoglycerate. It functions in the pathway carbohydrate degradation; glycolysis; pyruvate from D-glyceraldehyde 3-phosphate: step 3/5. Its function is as follows. Catalyzes the interconversion of 2-phosphoglycerate and 3-phosphoglycerate. The sequence is that of 2,3-bisphosphoglycerate-independent phosphoglycerate mutase from Haloarcula marismortui (strain ATCC 43049 / DSM 3752 / JCM 8966 / VKM B-1809) (Halobacterium marismortui).